The primary structure comprises 452 residues: 23S rRNA (uracil(1939)-C(5))-methyltransferase RlmD (452 aa).

The segment at 1-25 (MSKKKSNSGLRFQPAGGNRTPQVPV) is disordered. In terms of domain architecture, TRAM spans 22–80 (QVPVGKKQRLDIERLAGDGRGIAFLDGRTWFVSGALAGEAVEARVLNARGKVVEARLER). Residues cysteine 93, cysteine 99, cysteine 102, and cysteine 181 each contribute to the [4Fe-4S] cluster site. S-adenosyl-L-methionine is bound by residues glutamine 285, phenylalanine 314, asparagine 319, glutamate 335, aspartate 362, and aspartate 383. Catalysis depends on cysteine 409, which acts as the Nucleophile.

Belongs to the class I-like SAM-binding methyltransferase superfamily. RNA M5U methyltransferase family. RlmD subfamily.

It catalyses the reaction uridine(1939) in 23S rRNA + S-adenosyl-L-methionine = 5-methyluridine(1939) in 23S rRNA + S-adenosyl-L-homocysteine + H(+). Its function is as follows. Catalyzes the formation of 5-methyl-uridine at position 1939 (m5U1939) in 23S rRNA. The chain is 23S rRNA (uracil(1939)-C(5))-methyltransferase RlmD from Pseudomonas putida (strain ATCC 47054 / DSM 6125 / CFBP 8728 / NCIMB 11950 / KT2440).